A 389-amino-acid polypeptide reads, in one-letter code: Chalcone synthase (389 aa).

The active site involves Cys164.

The protein belongs to the thiolase-like superfamily. Chalcone/stilbene synthases family.

It catalyses the reaction (E)-4-coumaroyl-CoA + 3 malonyl-CoA + 3 H(+) = 2',4,4',6'-tetrahydroxychalcone + 3 CO2 + 4 CoA. It participates in secondary metabolite biosynthesis; flavonoid biosynthesis. Functionally, the primary product of this enzyme is 4,2',4',6'-tetrahydroxychalcone (also termed naringenin-chalcone or chalcone) which can under specific conditions spontaneously isomerize into naringenin. The polypeptide is Chalcone synthase (CHS) (Pueraria montana var. lobata (Kudzu vine)).